The following is a 233-amino-acid chain: Small ribosomal subunit protein uS3 (233 aa).

The 69-residue stretch at 39–107 folds into the KH type-2 domain; that stretch reads IRAFLKRKLY…DVNINIKEER (69 aa). Basic and acidic residues predominate over residues 212-222; sequence MQPEKTEESAP. The tract at residues 212-233 is disordered; the sequence is MQPEKTEESAPAKKPRRTRRGK. The segment covering 224–233 has biased composition (basic residues); that stretch reads KKPRRTRRGK.

The protein belongs to the universal ribosomal protein uS3 family. Part of the 30S ribosomal subunit. Forms a tight complex with proteins S10 and S14.

Binds the lower part of the 30S subunit head. Binds mRNA in the 70S ribosome, positioning it for translation. In Campylobacter jejuni subsp. jejuni serotype O:6 (strain 81116 / NCTC 11828), this protein is Small ribosomal subunit protein uS3.